Consider the following 833-residue polypeptide: Coiled-coil domain-containing protein 110 (833 aa).

A coiled-coil region spans residues 431-778; sequence LQNYLKESVQ…REYLNLSDKI (348 aa).

It is found in the nucleus. This is Coiled-coil domain-containing protein 110 (CCDC110) from Macaca fascicularis (Crab-eating macaque).